Here is a 406-residue protein sequence, read N- to C-terminus: Zinc finger CCCH domain-containing protein 15 homolog (406 aa).

Over residues 1-11 the composition is skewed to low complexity; the sequence is MPPKKAPAGPS. Residues 1 to 70 are disordered; that stretch reads MPPKKAPAGP…DKKKDEKEKK (70 aa). Over residues 12 to 28 the composition is skewed to basic and acidic residues; it reads KKTEQKKKEKVIEDKTF. Residues 38 to 50 are compositionally biased toward low complexity; that stretch reads QQKFIQQVQKQVQ. Basic and acidic residues predominate over residues 56-70; the sequence is PRQDGDKKKDEKEKK. The stretch at 57-82 forms a coiled coil; the sequence is RQDGDKKKDEKEKKLADLREMASIFK. 2 consecutive C3H1-type zinc fingers follow at residues 94-121 and 166-203; these read DPKS…HDLS and PTTE…HALP. The tract at residues 336–382 is disordered; it reads VDGSGTIASSTRLLDQATEAAKTAAAEDGAASDDENPSSSAPANDAA. 2 stretches are compositionally biased toward low complexity: residues 352 to 364 and 372 to 382; these read ATEA…AEDG and PSSSAPANDAA.

Belongs to the ZC3H15/TMA46 family.

This Drosophila pseudoobscura pseudoobscura (Fruit fly) protein is Zinc finger CCCH domain-containing protein 15 homolog.